The primary structure comprises 445 residues: Probable D-serine dehydratase (445 aa).

Residue Lys119 is modified to N6-(pyridoxal phosphate)lysine.

The protein belongs to the serine/threonine dehydratase family. DsdA subfamily. Pyridoxal 5'-phosphate serves as cofactor.

It catalyses the reaction D-serine = pyruvate + NH4(+). This is Probable D-serine dehydratase from Pseudomonas putida (strain GB-1).